Here is a 96-residue protein sequence, read N- to C-terminus: MLVKVSIHGQEYDLEVQPTDKIQEIKSKINELNGTPVEQIHPYIAGHAMKDGTTISDYPQIVEGSKIQVRVILKSQSDNSEKSEKSGKSEKDCILM.

The segment at 75–96 is disordered; that stretch reads SQSDNSEKSEKSGKSEKDCILM. Residues 79–96 are compositionally biased toward basic and acidic residues; that stretch reads NSEKSEKSGKSEKDCILM.

It belongs to the ubiquitin family.

In Dictyostelium discoideum (Social amoeba), this protein is Ubiquitin-like protein NEDD8-like protein 1 (nedd8l1).